The chain runs to 1224 residues: ATP-dependent helicase/deoxyribonuclease subunit B (1224 aa).

The UvrD-like helicase ATP-binding domain maps to 1–326 (MSLRFILGRA…VCAAANRRSE (326 aa)). An ATP-binding site is contributed by 8-15 (GRAGTGKS). Positions 283-584 (QSAPRFQHPE…KLSLIPPELD (302 aa)) constitute a UvrD-like helicase C-terminal domain. Positions 841, 1176, 1179, and 1185 each coordinate [4Fe-4S] cluster.

Belongs to the helicase family. AddB/RexB type 1 subfamily. In terms of assembly, heterodimer of AddA and AddB. Mg(2+) serves as cofactor. It depends on [4Fe-4S] cluster as a cofactor.

The heterodimer acts as both an ATP-dependent DNA helicase and an ATP-dependent, dual-direction single-stranded exonuclease. Recognizes the chi site generating a DNA molecule suitable for the initiation of homologous recombination. The AddB subunit has 5' -&gt; 3' nuclease activity but not helicase activity. The protein is ATP-dependent helicase/deoxyribonuclease subunit B of Heliobacterium modesticaldum (strain ATCC 51547 / Ice1).